We begin with the raw amino-acid sequence, 252 residues long: 5'-nucleotidase SurE (252 aa).

Residues Asp-8, Asp-9, Ser-39, and Asn-91 each coordinate a divalent metal cation.

This sequence belongs to the SurE nucleotidase family. A divalent metal cation serves as cofactor.

Its subcellular location is the cytoplasm. It carries out the reaction a ribonucleoside 5'-phosphate + H2O = a ribonucleoside + phosphate. Nucleotidase that shows phosphatase activity on nucleoside 5'-monophosphates. This chain is 5'-nucleotidase SurE, found in Legionella pneumophila (strain Corby).